Consider the following 387-residue polypeptide: Signal-regulatory protein gamma (387 aa).

Residues 1 to 28 form the signal peptide; sequence MPVPASWPHPPGPFLLLTLLLGLTEVAG. An Ig-like V-type domain is found at 29–137; it reads EEELQMIQPE…ENVEFKSGPG (109 aa). Topologically, residues 29–360 are extracellular; that stretch reads EEELQMIQPE…QKDQSSDATP (332 aa). 2 disulfide bridges follow: Cys53–Cys119 and Cys168–Cys226. Ig-like C1-type domains are found at residues 146-245 and 252-340; these read PSAP…ANLS and PTLE…LAVS. N-linked (GlcNAc...) asparagine glycans are attached at residues Asn243, Asn268, Asn309, and Asn317. Cys271 and Cys329 form a disulfide bridge. The chain crosses the membrane as a helical span at residues 361–383; it reads GPASSLTALLLIAVLLGPIYVPW. At 384–387 the chain is on the cytoplasmic side; that stretch reads KQKT.

As to quaternary structure, interacts with CD47. Detected in liver, and at very low levels in brain, heart, lung, pancreas, kidney, placenta and skeletal muscle. Expressed on CD4+ T-cells, CD8+ T-cells, CD56-bright natural killer (NK) cells, CD20+ cells, and all activated NK cells. Mainly present in the paracortical T-cell area of lymph nodes, with only sparse positive cells in the mantle and in the germinal center of B-cell follicles. In the thymus, primarily expressed in the medulla on mature T-lymphocytes that have undergone thymic selection.

The protein resides in the membrane. Probable immunoglobulin-like cell surface receptor. On binding with CD47, mediates cell-cell adhesion. Engagement on T-cells by CD47 on antigen-presenting cells results in enhanced antigen-specific T-cell proliferation and costimulates T-cell activation. The polypeptide is Signal-regulatory protein gamma (SIRPG) (Homo sapiens (Human)).